A 315-amino-acid polypeptide reads, in one-letter code: Porphobilinogen deaminase (315 aa).

Cysteine 238 is modified (S-(dipyrrolylmethanemethyl)cysteine).

The protein belongs to the HMBS family. In terms of assembly, monomer. Dipyrromethane serves as cofactor.

The enzyme catalyses 4 porphobilinogen + H2O = hydroxymethylbilane + 4 NH4(+). It participates in porphyrin-containing compound metabolism; protoporphyrin-IX biosynthesis; coproporphyrinogen-III from 5-aminolevulinate: step 2/4. Tetrapolymerization of the monopyrrole PBG into the hydroxymethylbilane pre-uroporphyrinogen in several discrete steps. The chain is Porphobilinogen deaminase from Albidiferax ferrireducens (strain ATCC BAA-621 / DSM 15236 / T118) (Rhodoferax ferrireducens).